The following is a 461-amino-acid chain: Lysosomal proton-coupled steroid conjugate and bile acid symporter SLC46A3 (461 aa).

The N-terminal stretch at 1–25 is a signal peptide; sequence MKILFVEPAIFLSAFAMTLTGPLTT. Residues 26–73 are Extracellular-facing; that stretch reads QYVYRRIWEETGNYTFSSDSNISECEKNKSSPIFAFQEEVQKKVSRFN. N-linked (GlcNAc...) asparagine glycans are attached at residues asparagine 38, asparagine 46, and asparagine 53. A helical membrane pass occupies residues 74 to 94; sequence LQMDISGLIPGLVSTFILLSI. The Cytoplasmic segment spans residues 95–101; the sequence is SDHYGRK. The helical transmembrane segment at 102 to 124 threads the bilayer; that stretch reads FPMILSSVGALATSVWLCLLCYF. At 125–133 the chain is on the extracellular side; the sequence is AFPFQLLIA. Residues 134-156 traverse the membrane as a helical segment; sequence STFIGAFCGNYTTFWGACFAYIV. Residues 157–170 lie on the Cytoplasmic side of the membrane; that stretch reads DQCKEHKQKTIRIA. Residues 171-191 form a helical membrane-spanning segment; sequence IIDFLLGLVTGLTGLSSGYFI. Residues 192–197 lie on the Extracellular side of the membrane; sequence RELGFE. A helical transmembrane segment spans residues 198-218; the sequence is WSFLIIAVSLAVNLIYILFFL. Residues 219–261 are Cytoplasmic-facing; it reads GDPVKECSSQNVTMSCSEGFKNLFYRTYMLFKNASGKRRFLLC. Residues 262–282 form a helical membrane-spanning segment; that stretch reads LLLFTVITYFFVVIGIAPIFI. At 283 to 294 the chain is on the extracellular side; that stretch reads LYELDSPLCWNE. The chain crosses the membrane as a helical span at residues 295–315; the sequence is VFIGYGSALGSASFLTSFLGI. The Cytoplasmic portion of the chain corresponds to 316–324; the sequence is WLFSYCMED. Residues 325-345 traverse the membrane as a helical segment; it reads IHMAFIGIFTTMTGMAMTAFA. The Extracellular portion of the chain corresponds to 346 to 347; the sequence is ST. A helical transmembrane segment spans residues 348-368; the sequence is TLMMFLARVPFLFTIVPFSVL. The Cytoplasmic portion of the chain corresponds to 369–382; the sequence is RSMLSKVVRSTEQG. The chain crosses the membrane as a helical span at residues 383 to 403; that stretch reads TLFACIAFLETLGGVTAVSTF. Over 404–415 the chain is Extracellular; the sequence is NGIYSATVAWYP. The chain crosses the membrane as a helical span at residues 416–436; that stretch reads GFTFLLSAGLLLLPAISLCVV. At 437–461 the chain is on the cytoplasmic side; that stretch reads KCTSWNEGSYELLIQEESSEDASDR. The Tyrosine-based lysosomal-sorting motif signature appears at 446–449; it reads YELL.

It belongs to the major facilitator superfamily. SLC46A family.

It localises to the lysosome membrane. It catalyses the reaction estrone 3-sulfate(out) + n H(+)(out) = estrone 3-sulfate(in) + n H(+)(in). It carries out the reaction 25-hydroxyvitamin D3 sulfate(out) + n H(+)(out) = 25-hydroxyvitamin D3 sulfate(in) + n H(+)(in). The catalysed reaction is cholate(out) + n H(+)(out) = cholate(in) + n H(+)(in). The enzyme catalyses glycocholate(out) + n H(+)(out) = glycocholate(in) + n H(+)(in). It catalyses the reaction taurocholate(out) + n H(+)(out) = taurocholate(in) + n H(+)(in). It carries out the reaction dehydroepiandrosterone 3-sulfate(out) + n H(+)(out) = dehydroepiandrosterone 3-sulfate(in) + n H(+)(in). The catalysed reaction is N-acetyl-D-muramoyl-L-alanyl-D-isoglutamine(out) + n H(+)(out) = N-acetyl-D-muramoyl-L-alanyl-D-isoglutamine(in) + n H(+)(in). The enzyme catalyses 2',3'-cGAMP(out) + n H(+)(out) = 2',3'-cGAMP(in) + n H(+)(in). In terms of biological role, lysosomal proton-coupled steroid conjugate and bile acid transporter. Preferentially recognizes lipophilic steroid conjugates or bile acis as endogenous substrates and seems to mediate escape from lysosomes to the cytoplasm. Modulates hepatic cytosolic copper homeostasis, maybe acting as a lysosomal copper transporter and sequestering copper ions in the lysosome. Transports catabolites of non-cleavable antibody-drug conjugates from the lysosome to the cytoplasm. Delivers pathogen-associated molecular patterns to cytosolic pattern recognition receptors as part of the innate immune response to microbes. Selectively transports bacterial muramyl dipeptide (MDP) into the cytosol for recognition by NOD2, triggering inflammatory responses. Likely acts as a redundant importer of cyclic GMP-AMP dinucleotides (cGAMPs) in monocyte and macrophage cell lineages. The transport mechanism, its electrogenicity and stoichiometry remain to be elucidated. This is Lysosomal proton-coupled steroid conjugate and bile acid symporter SLC46A3 from Homo sapiens (Human).